The following is a 213-amino-acid chain: MRGLLIAFEGIDGSGKSSQAVLLKDWIEMRRDVYLTEWNSSEWIHDIIKEAKKKNMLTSITFSLIHATDFSDRYERYILPMLKSGFVVICDRYVYTAYARDVVRNVDFDWVKRLYSFAIKPNFTFYIRVTPEIALERIRKAKRKIKPQEAGIDILGEIPLEEGFLKYQSRIVEIYDKIAKEESNFITIDGNRPLKDVQIDIRKILGEYIDNSL.

ATP is bound at residue 10–17; sequence GIDGSGKS.

This sequence belongs to the thymidylate kinase family.

The enzyme catalyses dTMP + ATP = dTDP + ADP. This Saccharolobus solfataricus (strain ATCC 35092 / DSM 1617 / JCM 11322 / P2) (Sulfolobus solfataricus) protein is Probable thymidylate kinase 2 (tmk2).